A 101-amino-acid polypeptide reads, in one-letter code: Precursor of CEP6 (101 aa).

A signal peptide spans 1 to 26; the sequence is MKLSVYIILSILFISTVFYEIQFTEA. Positions 27–48 are excised as a propeptide; the sequence is RQLRKTDDQDHDDHHFTVGYTD. Residues 29–42 show a composition bias toward basic and acidic residues; it reads LRKTDDQDHDDHHF. The disordered stretch occupies residues 29-101; that stretch reads LRKTDDQDHD…HAVKNNEPNA (73 aa). A hydroxyproline mark is found at Pro-52, Pro-55, and Pro-59. Residues 64–77 constitute a propeptide that is removed on maturation; the sequence is KMKENEENAGGYKD. A compositionally biased stretch (basic and acidic residues) spans 64-79; sequence KMKENEENAGGYKDDF. Residues Pro-81, Pro-84, and Pro-88 each carry the hydroxyproline modification. Residues 93-101 constitute a propeptide that is removed on maturation; sequence AVKNNEPNA.

This sequence belongs to the C-terminally encoded plant signaling peptide (CEP) family. Interacts with CEP receptors (e.g. CEPR1 and CEPR2). The mature small signaling peptide is generated by proteolytic processing of the longer precursor. In terms of tissue distribution, expressed in lateral root primordia and in lateral roots excluding the meristem region. Also present in the aerial tissues, such as leaf petioles and the shoot apex region.

It localises to the secreted. Its subcellular location is the extracellular space. The protein localises to the apoplast. In terms of biological role, extracellular signaling peptide that represses primary root growth rate. Modulates leaf morphology. Regulates systemic nitrogen (N)-demand signaling. Mediates up-regulation of genes involved in N uptake and assimilation pathways. In Arabidopsis thaliana (Mouse-ear cress), this protein is Precursor of CEP6.